The sequence spans 410 residues: Squalene synthase 1 (410 aa).

Glycine 2 is modified (N-acetylglycine). Transmembrane regions (helical) follow at residues 283-303 (SIFRFCAIPQIMAIGTLALCY) and 387-407 (QPNSVFIIMVVILLAIVFAYL).

This sequence belongs to the phytoene/squalene synthase family. It depends on Mg(2+) as a cofactor. Mn(2+) is required as a cofactor. As to expression, expressed in all tissues analyzed (seedlings, cotyledons, inflorescences, siliques, leaves, stems and roots). Highly expressed in roots and pollen.

The protein resides in the endoplasmic reticulum membrane. The enzyme catalyses 2 (2E,6E)-farnesyl diphosphate + NADPH + H(+) = squalene + 2 diphosphate + NADP(+). It carries out the reaction 2 (2E,6E)-farnesyl diphosphate + NADH + H(+) = squalene + 2 diphosphate + NAD(+). The protein operates within terpene metabolism; lanosterol biosynthesis; lanosterol from farnesyl diphosphate: step 1/3. The polypeptide is Squalene synthase 1 (Arabidopsis thaliana (Mouse-ear cress)).